A 348-amino-acid chain; its full sequence is Rhodopsin (348 aa).

N-acetylmethionine is present on M1. Residues 1–36 (MNGTEGLNFYVPFSNKTGVVRSPFEYPQYYLAEPWQ) lie on the Extracellular side of the membrane. N2 and N15 each carry an N-linked (GlcNAc...) asparagine glycan. A helical membrane pass occupies residues 37–61 (FSVLAAYMFLLIVLGFPINFLTLYV). Over 62–73 (TVQHKKLRTPLN) the chain is Cytoplasmic. A helical membrane pass occupies residues 74-96 (YIPLNLAVANLFMVFGGFTTTLY). Residues 97–110 (TSLHAYFVFGPTGC) lie on the Extracellular side of the membrane. An intrachain disulfide couples C110 to C187. The chain crosses the membrane as a helical span at residues 111–133 (NLEGFFATLGGEIALWSLVVLAI). The 'Ionic lock' involved in activated form stabilization motif lies at 134–136 (ERY). Residues 134 to 152 (ERYVVVCKPMSNFRFGENH) lie on the Cytoplasmic side of the membrane. A helical transmembrane segment spans residues 153–173 (AIMGLALTWVMAMACAAPPLV). The Extracellular portion of the chain corresponds to 174 to 202 (GWSRYIPEGMQCSCGIDYYTSRQEVNNES). E201 serves as a coordination point for Zn(2+). Residues 203–224 (FVIYMFVVHFTIPLVIIFFCYG) form a helical membrane-spanning segment. Residues 225 to 252 (QLVFTVKEAAAQQQESATTQKAEKEVTR) are Cytoplasmic-facing. A helical membrane pass occupies residues 253 to 274 (MVIIMVVAFLICWVPYASVAFY). Residues 275-286 (IFTHQGSDFGPI) are Extracellular-facing. Q279 serves as a coordination point for Zn(2+). The chain crosses the membrane as a helical span at residues 287 to 308 (FMTIPSFFAKSSSIYNPVIYIM). K296 carries the post-translational modification N6-(retinylidene)lysine. The Cytoplasmic portion of the chain corresponds to 309-348 (MNKQLRNCMLTTLCCGRNPLGDDEASTTASKTETSQVAPA). S-palmitoyl cysteine attachment occurs at residues C322 and C323. The tract at residues 330–348 (DDEASTTASKTETSQVAPA) is interaction with SAG. S334 is modified (phosphoserine). A phosphothreonine mark is found at T335 and T336. The residue at position 338 (S338) is a Phosphoserine. Phosphothreonine is present on residues T340 and T342. At S343 the chain carries Phosphoserine.

This sequence belongs to the G-protein coupled receptor 1 family. Opsin subfamily. As to quaternary structure, homodimer. May form a complex composed of RHO, GRK1 and RCVRN in a Ca(2+)-dependent manner; RCVRN prevents the interaction between GRK1 and RHO. Interacts with GRK1. Interacts (phosphorylated form) with SAG. Interacts with GNAT1. Interacts with GNAT3. SAG and G-proteins compete for a common binding site. Interacts with PRCD; the interaction promotes PRCD stability. Forms a complex with ASAP1 and ARF4. Forms a complex with ASAP1, RAB11A, Rabin8/RAB3IP, ARF4 and RAB11FIP3; the complex regulates Golgi-to-cilia rhodopsin/RHO transport in photoreceptors. Post-translationally, phosphorylated on some or all of the serine and threonine residues present in the C-terminal region. In terms of processing, contains one covalently linked retinal chromophore. Upon light absorption, the covalently bound 11-cis-retinal is converted to all-trans-retinal. After hydrolysis of the Schiff base and release of the covalently bound all-trans-retinal, active rhodopsin is regenerated by binding of a fresh molecule of 11-cis-retinal.

The protein localises to the membrane. Its subcellular location is the cell projection. It localises to the cilium. The protein resides in the photoreceptor outer segment. In terms of biological role, photoreceptor required for image-forming vision at low light intensity. Required for photoreceptor cell viability after birth. Light-induced isomerization of 11-cis to all-trans retinal triggers a conformational change that activates signaling via G-proteins. Subsequent receptor phosphorylation mediates displacement of the bound G-protein alpha subunit by the arrestin SAG and terminates signaling. The chain is Rhodopsin (RHO) from Globicephala melas (Long-finned pilot whale).